A 1295-amino-acid polypeptide reads, in one-letter code: MTQSPVQPPPPLPAQPHSAAGGVIRGDVQVRCAGCRVILRVKTGVVEFSCPTCQLPQMLPPELLSRARPQFPQSPQQPPQPIQTLPPPIQQQLKPLNLPRPPVPAHGIDPTKMQLPCANCQAILNVPHGLTRFSCPQCHVELAVDVSKLNRSLTASQSHSNPPTPAAPTVPPPPPPEEVNEEAIEVEREEDEGGTAGETFMDYRPPKLSIGPPHPDPIVETSSLSAVQPPEPTYDLKIKEELERSKALSCLQIETLVYACQRHLQHLADGTRAGFFVGDGAGVGKGRTIAGLIWENWKHGRRKALWISIGSDLKYDARRDLDDVGATCVGVNPLNKLPYSKLDSKNVGIKEGVVFLTYNSLIASSEKGRSRLQQLVQWCGPEFDGLLIFDECHKAKNLVPEAGSQPTRIGQAVVDIQDKIPQARVIYCSATGASEPRNMGYMVRLGLWGAGTSFSDFNKFLGALDKGGTGALELVAMDMKARGMYVCRTLSYKGAEFEIVEARLEAGMEAMYNKSAEFWAELRIELLSASAFLPNEKPNSSQLWRLYWSSHQRFFRHLCMSAKVPVTVRLAKKALSTNKCVVIGLQSTGEARTEEAVNKYGLELDDFVSGPRELLLKFVEENYPLPEQPEPLSEDDSVKELQRKRHSASPGVSIRGRVRKMAKWKPDSDNESDLESEADSADDSNDSDDEFQICQICSGEDERKKLLHCSECDKLFHPDCVVPPVIDLPSEAWICFSCKEKTEEYIQARRLYIAELQKRYEAALERKSKIIEIIRSLNLPNNPLDDIVDQLGGPEKVAEMTGRRGMLVRASNGKGVTYQARNTKDITMEMVNMHEKQLFMDGKKLVAIISEAGSAGVSLQADRRAVNQKRRVHLTLELPWSADRAIQQFGRTHRSNQTSAPEYRLLFTNLGGERRFASIVAKRLETLGALTQGDRRAGPSGPSLSAYNYDSNFGKKSLMVMYRGIMEQEKLPVLPPGCSIDEPETVKEFLTKARAALVAVGIVRDSVLANGKDVGRFSGRIIDSDMHDVGRFLNRLLGLPPDIQNRLFELFTSILDVLVHNARIEGSFDSGIVDMKANSVELLSTPKTVHVDQMSGASTMLFTFTLDRGVTWESASSMLEGKRRDGLGSANDGFFESKREWLGRRHFILAFESAASGLFKIVRPAVGESIREMSLSELKTKYRKLSSLEKARTGWEDEYEVSSKQCMHGPKCKLGEYCTVGRRIQEVNVVGGLILPIWGTIEKALSKQARHSHKRIRVIRIETTTDNQRIVGLSIPNAAVETVLQDLAWVQEIDD.

Pro residues-rich tracts occupy residues methionine 1–alanine 14, proline 75–isoleucine 89, and proline 162–glutamate 177. Disordered regions lie at residues methionine 1–alanine 20, arginine 68–glycine 107, leucine 153–arginine 204, and proline 626–aspartate 688. The span at glutamate 178–glycine 193 shows a compositional bias: acidic residues. The Nuclear localization signal signature appears at arginine 643 to proline 650. Over residues aspartate 669–aspartate 688 the composition is skewed to acidic residues. The PHD-type zinc-finger motif lies at phenylalanine 691 to lysine 741.

It belongs to the SBNO family. As to quaternary structure, interacts with SWI/SNF and ISWI chromatin remodelers such as BRM, CHR11 and CHR17. Binds to histone H3.

Its subcellular location is the nucleus. In terms of biological role, required for normal embryo development. Necessary to acquire heat stress (HS) memory, by modulating nucleosome occupancy and regulating heat-induced gene expression. Associates globally with the nucleosome-poor regions flanking the transcription units of expressed genes. Binds to the promoter regions, primarily to the proximal promoter just upstream of the transcriptional start sites (TSS) and somewhat more weakly to the region downstream of the transcription termination site (TTS), of actively expressed genes (e.g. HSA32, HSP18.2 and HSP22.0) in a heat-dependent fashion. The polypeptide is Protein FORGETTER 1 (Arabidopsis thaliana (Mouse-ear cress)).